Consider the following 433-residue polypeptide: 3-phosphoshikimate 1-carboxyvinyltransferase (433 aa).

Residues Lys-22, Ser-23, and Arg-27 each coordinate 3-phosphoshikimate. Lys-22 contributes to the phosphoenolpyruvate binding site. Residues Gly-95 and Arg-123 each contribute to the phosphoenolpyruvate site. Positions 167, 169, 315, and 342 each coordinate 3-phosphoshikimate. Gln-169 serves as a coordination point for phosphoenolpyruvate. Catalysis depends on Asp-315, which acts as the Proton acceptor. Phosphoenolpyruvate contacts are provided by Arg-346 and Arg-387.

The protein belongs to the EPSP synthase family. As to quaternary structure, monomer.

It is found in the cytoplasm. The enzyme catalyses 3-phosphoshikimate + phosphoenolpyruvate = 5-O-(1-carboxyvinyl)-3-phosphoshikimate + phosphate. It functions in the pathway metabolic intermediate biosynthesis; chorismate biosynthesis; chorismate from D-erythrose 4-phosphate and phosphoenolpyruvate: step 6/7. Its function is as follows. Catalyzes the transfer of the enolpyruvyl moiety of phosphoenolpyruvate (PEP) to the 5-hydroxyl of shikimate-3-phosphate (S3P) to produce enolpyruvyl shikimate-3-phosphate and inorganic phosphate. The sequence is that of 3-phosphoshikimate 1-carboxyvinyltransferase from Legionella pneumophila (strain Paris).